The following is a 1136-amino-acid chain: DNA-directed RNA polymerase I subunit RPA2 (1136 aa).

Residues 1-24 (MDPGSRWRNLPSGPSLKHLTDPSY) are disordered. Residue R180 coordinates RNA. A loop B region spans residues 194–208 (VRPKWKTRGPGYTHY). The tract at residues 236–247 (LNFIYRKELFFL) is loop A. Position 367 (D367) interacts with RNA. Fork loop regions lie at residues 439–453 (LRSK…DSGL) and 474–489 (RGAD…VRRL). Residue K890 participates in RNA binding. R1020 and R1036 together coordinate DNA. The residue at position 1051 (S1051) is a Phosphoserine. Positions 1071, 1074, 1099, and 1102 each coordinate Zn(2+). The segment at 1071-1102 (CVKCGSLLSPLLEKPPPSWSAMRNRKYNCTLC) adopts a C4-type zinc-finger fold.

Belongs to the RNA polymerase beta chain family. Component of the RNA polymerase I (Pol I) complex consisting of 13 subunits: a ten-subunit catalytic core composed of POLR1A/RPA1, POLR1B/RPA2, POLR1C/RPAC1, POLR1D/RPAC2, POLR1H/RPA12, POLR2E/RPABC1, POLR2F/RPABC2, POLR2H/RPABC3, POLR2K/RPABC4 and POLR2L/RPABC5; a mobile stalk subunit POLR1F/RPA43 protruding from the core and additional subunits homologous to general transcription factors POLR1E/RPA49 and POLR1G/RPA34. Part of Pol I pre-initiation complex (PIC), in which Pol I core assembles with RRN3 and promoter-bound UTBF and SL1/TIF-IB complex.

The protein localises to the nucleus. The protein resides in the nucleolus. Its subcellular location is the chromosome. The catalysed reaction is RNA(n) + a ribonucleoside 5'-triphosphate = RNA(n+1) + diphosphate. Functionally, catalytic core component of RNA polymerase I (Pol I), a DNA-dependent RNA polymerase which synthesizes ribosomal RNA precursors using the four ribonucleoside triphosphates as substrates. Transcribes 47S pre-rRNAs from multicopy rRNA gene clusters, giving rise to 5.8S, 18S and 28S ribosomal RNAs. Pol I-mediated transcription cycle proceeds through transcription initiation, transcription elongation and transcription termination stages. During transcription initiation, Pol I pre-initiation complex (PIC) is recruited by the selectivity factor 1 (SL1/TIF-IB) complex bound to the core promoter that precedes an rDNA repeat unit. The PIC assembly bends the promoter favoring the formation of the transcription bubble and promoter escape. Once the polymerase has escaped from the promoter it enters the elongation phase during which RNA is actively polymerized, based on complementarity with the template DNA strand. Highly processive, assembles in structures referred to as 'Miller trees' where many elongating Pol I complexes queue and transcribe the same rDNA coding regions. At terminator sequences downstream of the rDNA gene, PTRF interacts with Pol I and halts Pol I transcription leading to the release of the RNA transcript and polymerase from the DNA. Forms Pol I active center together with the largest subunit POLR1A/RPA1. Appends one nucleotide at a time to the 3' end of the nascent RNA, with POLR1A/RPA1 contributing a Mg(2+)-coordinating DxDGD motif, and POLR1B/RPA2 providing lysine residues believed to facilitate Watson-Crick base pairing between the incoming nucleotide and the template base. Typically, Mg(2+) ions direct a 5' nucleoside triphosphate to form a phosphodiester bond with the 3' hydroxyl of the preceding nucleotide of the nascent RNA, with the elimination of pyrophosphate. Has proofreading activity: Pauses and backtracks to allow the cleavage of a missincorporated nucleotide via POLR1H/RPA12. High Pol I processivity is associated with decreased transcription fidelity. This is DNA-directed RNA polymerase I subunit RPA2 (POLR1B) from Pongo abelii (Sumatran orangutan).